The sequence spans 737 residues: Pentatricopeptide repeat-containing protein At3g49740 (737 aa).

PPR repeat units lie at residues 20–55 (TLLNLNRRLTGLTRSGENRNALKLFADVHRCTTLRP), 56–90 (DQYSVSLAITTARHLRDTIFGGQVHCYAIRSGLLC), 91–121 (HSHVSNTLLSLYERLGNLASLKKKFDEIDEP), 122–152 (DVYSWTTLLSASFKLGDIEYAFEVFDKMPER), 154–188 (DVAIWNAMITGCKESGYHETSVELFREMHKLGVRH), 189–222 (DKFGFATILSMCDYGSLDFGKQVHSLVIKAGFFI), 223–253 (ASSVVNALITMYFNCQVVVDACLVFEETDVA), 256–289 (DQVTFNVVIDGLAGFKRDESLLVFRKMLEASLRP), 290–321 (TDLTFVSVMGSCSCAAMGHQVHGLAIKTGYEK), 322–352 (YTLVSNATMTMYSSFEDFGAAHKVFESLEEK), 353–387 (DLVTWNTMISSYNQAKLGKSAMSVYKRMHIIGVKP), 388–418 (DEFTFGSLLATSLDLDVLEMVQACIIKFGLS), 420–454 (KIEISNALISAYSKNGQIEKADLLFERSLRKNLIS), 455–485 (WNAIISGFYHNGFPFEGLERFSCLLESEVRI), 488–522 (DAYTLSTLLSICVSTSSLMLGSQTHAYVLRHGQFK), 523–553 (ETLIGNALINMYSQCGTIQNSLEVFNQMSEK), 554–588 (DVVSWNSLISAYSRHGEGENAVNTYKTMQDEGKVI), 590–620 (DAATFSAVLSACSHAGLVEEGLEIFNSMVEF), and 626–656 (NVDHFSCLVDLLGRAGHLDEAESLVKISEKT). Positions 663-737 (VWWALFSACA…KQRGCSWMRL (75 aa)) are type E motif; degenerate.

Belongs to the PPR family. PCMP-E subfamily.

This chain is Pentatricopeptide repeat-containing protein At3g49740 (PCMP-E84), found in Arabidopsis thaliana (Mouse-ear cress).